A 157-amino-acid polypeptide reads, in one-letter code: Rieske domain-containing protein (157 aa).

Methionine 1 bears the N-acetylmethionine mark. Serine 6 bears the Phosphoserine mark. Rieske domains are found at residues threonine 16–glycine 127 and serine 17–valine 131. [2Fe-2S] cluster is bound by residues cysteine 57, histidine 59, cysteine 80, and histidine 83.

Requires [2Fe-2S] cluster as cofactor.

The sequence is that of Rieske domain-containing protein (Rfesd) from Mus musculus (Mouse).